Here is a 91-residue protein sequence, read N- to C-terminus: Non-specific lipid-transfer protein 1 (91 aa).

Disulfide bonds link Cys4–Cys51, Cys14–Cys28, Cys29–Cys74, and Cys49–Cys88.

The protein belongs to the plant LTP family. As to expression, detected in seeds (at protein level).

Its function is as follows. Plant non-specific lipid-transfer proteins transfer phospholipids as well as galactolipids across membranes. May play a role in wax or cutin deposition in the cell walls of expanding epidermal cells and certain secretory tissues. In Carum carvi (Caraway), this protein is Non-specific lipid-transfer protein 1.